The chain runs to 212 residues: ECF RNA polymerase sigma factor SigD (212 aa).

Positions 49 to 119 (ETIRPIVVRY…VADAHRAAGR (71 aa)) are sigma-70 factor domain-2. The short motif at 75 to 78 (DVAQ) is the Polymerase core binding element. The interval 152-201 (NELLEILPAKQREILILRVVVGLSAEETAAAVGSTTGAVRVAQHRALQRL) is sigma-70 factor domain-4. Positions 176–195 (AEETAAAVGSTTGAVRVAQH) form a DNA-binding region, H-T-H motif.

The protein belongs to the sigma-70 factor family. ECF subfamily. In terms of assembly, interacts transiently with the RNA polymerase catalytic core formed by RpoA, RpoB, RpoC and RpoZ (2 alpha, 1 beta, 1 beta' and 1 omega subunit) to form the RNA polymerase holoenzyme that can initiate transcription. Interacts (via sigma-70 factor domain 4) with RsdA.

Functionally, sigma factors are initiation factors that promote the attachment of RNA polymerase to specific initiation sites and are then released. Extracytoplasmic function (ECF) sigma factors are held in an inactive form by an anti-sigma factor until released by regulated intramembrane proteolysis. In Mycobacterium bovis (strain ATCC BAA-935 / AF2122/97), this protein is ECF RNA polymerase sigma factor SigD (sigD).